The primary structure comprises 245 residues: Probable ABC transporter ATP-binding protein p29 (245 aa).

The 239-residue stretch at 7–245 folds into the ABC transporter domain; it reads LSFEKVSIIY…KEQLYKIYDN (239 aa). Residue 39-46 participates in ATP binding; it reads GKSGVGKS.

It belongs to the ABC transporter superfamily.

In terms of biological role, part of a high-affinity transport system. The protein is Probable ABC transporter ATP-binding protein p29 (p29) of Mycoplasma genitalium (strain ATCC 33530 / DSM 19775 / NCTC 10195 / G37) (Mycoplasmoides genitalium).